The sequence spans 449 residues: FAD-linked oxidoreductase janO (449 aa).

Residues Pro32–Leu203 form the FAD-binding PCMH-type domain.

This sequence belongs to the oxygen-dependent FAD-linked oxidoreductase family. FAD is required as a cofactor.

It functions in the pathway secondary metabolite biosynthesis. In terms of biological role, FAD-linked oxidoreductase; part of the gene cluster that mediates the biosynthesis of the indole diterpenes janthitremanes such as shearinine K or shearinine A. The geranylgeranyl diphosphate (GGPP) synthase janG catalyzes the first step in janthitremane biosynthesis via conversion of farnesyl pyrophosphate and isopentyl pyrophosphate into geranylgeranyl pyrophosphate (GGPP). Condensation of indole-3-glycerol phosphate with GGPP by the prenyl transferase janC then forms 3-geranylgeranylindole (3-GGI). Epoxidation by the FAD-dependent monooxygenase janM leads to a epoxidized-GGI that is substrate of the terpene cyclase janB for cyclization to yield paspaline. Paspaline is subsequently converted to 13-desoxypaspaline by the cytochrome P450 monooxygenase janP, via beta-PC-M6 in a series of alpha-face oxidations. The cytochrome P450 monooxygenase janQ is proposed to carry out sequential beta-face oxidation steps at C-7 and C-13 of 13-desoxypaspaline to form paspalicine and paspalinine respectively. The indole diterpene prenyltransferase janD may then convert paspalinine into shearinine K which is substrate of janO and/or additional enzymes for oxidation and cyclization to generate shearinine A. This Penicillium janthinellum (Penicillium vitale) protein is FAD-linked oxidoreductase janO.